A 911-amino-acid polypeptide reads, in one-letter code: Inter-alpha-trypsin inhibitor heavy chain H1 (911 aa).

Positions Met-1–Ala-27 are cleaved as a signal peptide. Positions Leu-28–Arg-34 are excised as a propeptide. The VIT domain occupies Ser-37–Glu-166. Cys-60 is a glycosylation site (S-linked (Hex...) cysteine). Position 129 is a phosphoserine (Ser-129). A Phagocytosis uptake signal motif is present at residues Val-181 to Lys-184. 2 disulfide bridges follow: Cys-244–Cys-247 and Cys-268–Cys-540. A glycan (N-linked (GlcNAc...) (complex) asparagine) is linked at Asn-285. Residues Asn-290–Glu-450 enclose the VWFA domain. Residues Ser-387–Phe-911 form a hyaluronan-binding region. 2 positions are modified to phosphothreonine: Thr-402 and Thr-407. Asn-588 carries N-linked (GlcNAc...) (complex) asparagine glycosylation. An O-linked (GalNAc...) threonine glycan is attached at Thr-653. The residue at position 672 (Asp-672) is an Aspartate 1-(chondroitin 4-sulfate)-ester. Residues Pro-673–Phe-911 constitute a propeptide that is removed on maturation. N-linked (GlcNAc...) asparagine glycosylation is present at Asn-750.

The protein belongs to the ITIH family. As to quaternary structure, I-alpha-I plasma protease inhibitors are assembled from one or two heavy chains (HC) and one light chain, bikunin. Inter-alpha-inhibitor (I-alpha-I) is composed of ITIH1/HC1, ITIH2/HC2 and bikunin. Interacts with TNFAIP6 (via Link and CUB domains). Post-translationally, heavy chains are linked to bikunin via chondroitin 4-sulfate esterified to the alpha-carboxyl of the C-terminal aspartate after propeptide cleavage. The S-linked glycan is composed of two 6-carbon sugars, possibly Glc or Gal.

The protein resides in the secreted. May act as a carrier of hyaluronan in serum or as a binding protein between hyaluronan and other matrix protein, including those on cell surfaces in tissues to regulate the localization, synthesis and degradation of hyaluronan which are essential to cells undergoing biological processes. Its function is as follows. Contains a potential peptide which could stimulate a broad spectrum of phagocytotic cells. The chain is Inter-alpha-trypsin inhibitor heavy chain H1 (ITIH1) from Homo sapiens (Human).